We begin with the raw amino-acid sequence, 301 residues long: 1,5-anhydro-D-fructose reductase (301 aa).

Asp35 is an NADP(+) binding site. Tyr40 serves as the catalytic Proton donor. His102 serves as a coordination point for substrate. NADP(+)-binding positions include Gln175 and 246-258 (IPKS…IREN).

Belongs to the aldo/keto reductase family. In terms of assembly, monomer.

It is found in the cytoplasm. The catalysed reaction is 1,5-anhydro-D-glucitol + NADP(+) = 1,5-anhydro-D-fructose + NADPH + H(+). With respect to regulation, inhibited by p-chloromercuribenzoic acid and alkyliodines. Its function is as follows. Catalyzes the NADPH-dependent reduction of 1,5-anhydro-D-fructose (AF) to 1,5-anhydro-D-glucitol. The protein is 1,5-anhydro-D-fructose reductase (Akr1e2) of Mus musculus (Mouse).